The chain runs to 379 residues: MKEIWETLKQYFGDGFVPGSAPLRYEMHFCDMKEPLNKKQSMRYGVEIPEDAMPLFSVLGDTCAPPCSCQDISGVIEHIDRYLENAPIRHADDYTITSGKDDEDINQVSLYIMRDTLSWWVHWGGSLHPNNYWKLIYVAFAAIPDDVQVHPRDFIDGTYRFLGHSWNDCLNGLLAEGVPSDQVKLAEMTLWRQMATQYIEKVDPGLRSLLVSKTTLMTQYRVMTANTLGCAVLLLASEGVIVGDLDDGALEMASIAQCLSMDMAKEALGVLEGEKTETVAGDRRQLKRELRWLYVRCMKYLDAQPHAEFLRRFASSGLHYVPMMDRYLERVRGHIRFPIRESVARILEPFIKREPTPNKSGREADHIAQVVNEPITVAL.

It belongs to the terpene synthase family. Alpha-humulene synthase eupE subfamily. Mg(2+) is required as a cofactor.

It carries out the reaction (2E,6E)-farnesyl diphosphate = alpha-humulene + diphosphate. Its pathway is secondary metabolite biosynthesis; terpenoid biosynthesis. Functionally, alpha-humulene synthase; part of the gene cluster that mediates the biosynthesis of eupenifeldin, a bistropolone meroterpenoid that acts as an antitumor agent. The first step of eupenifeldin biosynthesis is the biosynthesis of 3-methylorcinaldehyde performed by the non-reducing polyketide synthase eupA. Oxidative dearomatization of 3-methylorcinaldehyde likely catalyzed by the FAD-dependent monooxygenase eupB is followed by oxidative ring expansion by the 2-oxoglutarate-dependent dioxygenase eupC to provide the first tropolone metabolite, tropolone stipitaldehyde. In parallel, generation of sesquiterpene alpha-humulene from farnesylpyrophosphate (FPP) is catalyzed by the terpene cyclase eupE. The cytochrome P450 monooxygenase eupD then hydroxylates humulene to humulenol. The putative Diels-Alderase eupF probably catalyzes the formation of the tropolone-humulene skeleton by linking humulenol and the polyketide moiety. The short-chain dehydrogenase/reductase eupG and the flavin-dependent monooxygenase eupH are also essential for eupenifeldin biosynthesis and are likely the additional decorating enzymes of the tropolone-humulene skeleton to produce final eupenifeldin or derivatives. In Phoma sp, this protein is Alpha-humulene synthase eupE.